Here is a 279-residue protein sequence, read N- to C-terminus: Probable endonuclease 4 (279 aa).

The Zn(2+) site is built by H66, H106, E142, D175, H178, H212, D225, H227, and E257.

The protein belongs to the AP endonuclease 2 family. Requires Zn(2+) as cofactor.

The catalysed reaction is Endonucleolytic cleavage to 5'-phosphooligonucleotide end-products.. Endonuclease IV plays a role in DNA repair. It cleaves phosphodiester bonds at apurinic or apyrimidinic (AP) sites, generating a 3'-hydroxyl group and a 5'-terminal sugar phosphate. In Moorella thermoacetica (strain ATCC 39073 / JCM 9320), this protein is Probable endonuclease 4.